Consider the following 174-residue polypeptide: Centrosomal protein 20 (174 aa).

Residues 1–104 (MATVAELKAV…AFEESKDNTI (104 aa)) form a necessary and sufficient for homooligomerization and localization to centrosomes and pericentriolar satellites region. Positions 49 to 81 (ENLLINELIREYLEFNKYKYTASVLIAESGQPV) constitute a LisH domain. The segment at 129–174 (GPSLQPSDPSLGRQPSRRKPMDDHLRKEEQKSTNIEDLHVSQAVNR) is disordered. Ser-144 carries the phosphoserine modification. Basic and acidic residues predominate over residues 147-167 (KPMDDHLRKEEQKSTNIEDLH).

This sequence belongs to the CEP43 family. Homooligomer; probably required for localization to centrosomes. Forms a complex with KIAA0753/OFIP and OFD1; within this complex may stabilize the interaction between OFD1 and KIAA0753/OFIP. Interacts with PCM1; this interaction may be mediated by KIAA0753/OFIP. Interacts with PLK1 in later G1, S, G2 and M phases of the cell cycle; this interaction recruits PLK1 to centrosomes. In terms of tissue distribution, widely expressed. Detected in brain, heart, kidney, liver, lung, skeletal muscle, placenta and intestine.

It localises to the cytoplasm. It is found in the cytoskeleton. Its subcellular location is the microtubule organizing center. The protein resides in the centrosome. The protein localises to the centriole. It localises to the cell projection. It is found in the cilium. Its subcellular location is the cilium basal body. The protein resides in the cytoplasmic granule. The protein localises to the centriolar satellite. In terms of biological role, involved in the biogenesis of cilia. Required for the recruitment of PLK1 to centrosomes and S phase progression. This is Centrosomal protein 20 from Homo sapiens (Human).